The primary structure comprises 197 residues: ADP-ribosylation factor-like protein 16 (197 aa).

GTP-binding positions include 30–37 (GATGVGKT), 82–86 (ELGGC), and 139–142 (NKID).

Belongs to the small GTPase superfamily. Arf family. Interacts with RIGI; this interaction is GTP-dependent and induced upon viral infection; this interaction suppresses the RNA sensing activity of RIGI.

It localises to the cytoplasm. In terms of biological role, may suppress the RNA sensing activity of RIGI in a GTP-dependent. The polypeptide is ADP-ribosylation factor-like protein 16 (Homo sapiens (Human)).